Consider the following 178-residue polypeptide: Aspartic proteinase nepenthesin-2 (178 aa).

Asp98 is an active-site residue.

It belongs to the peptidase A1 family.

It is found in the secreted. The enzyme catalyses Similar to pepsin, but also cleaves on either side of Asp and at Lys-|-Arg.. Its activity is regulated as follows. Inhibited by pepstatin and by diazoacetyl-D,L-norleucine methyl ester (DAN) in the presence of Cu(2+) ions. Its function is as follows. Extracellular proteinase found in the pitcher fluid of carnivorous plants. Digest prey for nitrogen uptake. The sequence is that of Aspartic proteinase nepenthesin-2 from Nepenthes distillatoria (Pitcher plant).